The sequence spans 235 residues: Large ribosomal subunit protein uL1 (235 aa).

Belongs to the universal ribosomal protein uL1 family. In terms of assembly, part of the 50S ribosomal subunit.

In terms of biological role, binds directly to 23S rRNA. The L1 stalk is quite mobile in the ribosome, and is involved in E site tRNA release. Its function is as follows. Protein L1 is also a translational repressor protein, it controls the translation of the L11 operon by binding to its mRNA. The polypeptide is Large ribosomal subunit protein uL1 (Mycolicibacterium smegmatis (strain ATCC 700084 / mc(2)155) (Mycobacterium smegmatis)).